A 688-amino-acid chain; its full sequence is Lipase (688 aa).

A signal peptide spans Met1–Ala35. The disordered stretch occupies residues Gly31–Asn309. Residues Ala36–Ala302 constitute a propeptide, removed in mature form. The segment covering Val45 to Gly54 has biased composition (polar residues). A compositionally biased stretch (low complexity) spans Asn68 to Ser79. Composition is skewed to basic and acidic residues over residues Glu84 to Asp95, Ser103 to Lys117, and His126 to Ser143. A compositionally biased stretch (polar residues) spans Glu144–Ala172. Basic and acidic residues predominate over residues Lys173–Ser183. Over residues Lys184–Glu211 the composition is skewed to polar residues. Positions Ser240 to Ser267 are enriched in basic and acidic residues. Residues Leu274–Gln289 show a composition bias toward polar residues. The Nucleophile role is filled by Ser418. Asp609 functions as the Charge relay system in the catalytic mechanism. Asp647 provides a ligand contact to Ca(2+). The Charge relay system role is filled by His648. Positions 650, 655, and 658 each coordinate Ca(2+).

It belongs to the AB hydrolase superfamily. Lipase family.

The protein localises to the secreted. It catalyses the reaction a triacylglycerol + H2O = a diacylglycerol + a fatty acid + H(+). In Staphylococcus epidermidis, this protein is Lipase (lip).